Consider the following 391-residue polypeptide: Acetyl-CoA acetyltransferase (391 aa).

The Acyl-thioester intermediate role is filled by cysteine 88. Catalysis depends on proton acceptor residues histidine 347 and cysteine 377.

The protein belongs to the thiolase-like superfamily. Thiolase family. In terms of assembly, homotetramer.

It is found in the cytoplasm. The catalysed reaction is 2 acetyl-CoA = acetoacetyl-CoA + CoA. The protein operates within metabolic intermediate biosynthesis; (R)-mevalonate biosynthesis; (R)-mevalonate from acetyl-CoA: step 1/3. This Paracoccus denitrificans protein is Acetyl-CoA acetyltransferase (phaA).